Here is a 1016-residue protein sequence, read N- to C-terminus: S-layer protein A (1016 aa).

Residues 1–30 (MDLSTKKVISAGLVFIYALSLAMLVPMFLA) form the signal peptide.

This sequence belongs to the Sulfolobales SlaA family. In terms of assembly, the mushroom-shaped unit cells of the Sulfolobales' S-layers may consist of three SlaB subunits and six SlaA subunits.

The protein resides in the secreted. It localises to the cell wall. Its subcellular location is the S-layer. Its function is as follows. S-layer large protein. May form the highly ordered outer sheath. The chain is S-layer protein A from Acidianus ambivalens (Desulfurolobus ambivalens).